The primary structure comprises 208 residues: Large ribosomal subunit protein bL25 (208 aa).

This sequence belongs to the bacterial ribosomal protein bL25 family. CTC subfamily. Part of the 50S ribosomal subunit; part of the 5S rRNA/L5/L18/L25 subcomplex. Contacts the 5S rRNA. Binds to the 5S rRNA independently of L5 and L18.

Functionally, this is one of the proteins that binds to the 5S RNA in the ribosome where it forms part of the central protuberance. The polypeptide is Large ribosomal subunit protein bL25 (Phenylobacterium zucineum (strain HLK1)).